The chain runs to 322 residues: Undecaprenyl-phosphate 4-deoxy-4-formamido-L-arabinose transferase (322 aa).

Over 1-235 (MFEIHPVKKV…TCLTTTPLRM (235 aa)) the chain is Cytoplasmic. Residues 236 to 256 (LSLLGSIIAIGGFSIAVLLVI) form a helical membrane-spanning segment. Over 257–269 (LRLTFGPQWAAEG) the chain is Periplasmic. Residues 270–290 (VFMLFAVLFTFIGAQFIGMGL) traverse the membrane as a helical segment. The Cytoplasmic portion of the chain corresponds to 291 to 322 (LGEYIGRIYTDVRARPRYFVQQVIRPSSKENE).

Belongs to the glycosyltransferase 2 family.

It is found in the cell inner membrane. The catalysed reaction is UDP-4-deoxy-4-formamido-beta-L-arabinose + di-trans,octa-cis-undecaprenyl phosphate = 4-deoxy-4-formamido-alpha-L-arabinopyranosyl di-trans,octa-cis-undecaprenyl phosphate + UDP. Its pathway is glycolipid biosynthesis; 4-amino-4-deoxy-alpha-L-arabinose undecaprenyl phosphate biosynthesis; 4-amino-4-deoxy-alpha-L-arabinose undecaprenyl phosphate from UDP-4-deoxy-4-formamido-beta-L-arabinose and undecaprenyl phosphate: step 1/2. It functions in the pathway bacterial outer membrane biogenesis; lipopolysaccharide biosynthesis. Functionally, catalyzes the transfer of 4-deoxy-4-formamido-L-arabinose from UDP to undecaprenyl phosphate. The modified arabinose is attached to lipid A and is required for resistance to polymyxin and cationic antimicrobial peptides. This Shigella flexneri protein is Undecaprenyl-phosphate 4-deoxy-4-formamido-L-arabinose transferase.